Reading from the N-terminus, the 744-residue chain is Biotin sulfoxide reductase (744 aa).

Mo-bis(molybdopterin guanine dinucleotide) is bound at residue S121.

Belongs to the prokaryotic molybdopterin-containing oxidoreductase family. Mo-bis(molybdopterin guanine dinucleotide) serves as cofactor.

This enzyme may serve as a scavenger, allowing the cell to utilize biotin sulfoxide as a biotin source. It reduces a spontaneous oxidation product of biotin, D-biotin D-sulfoxide (BSO or BDS), back to biotin. In Cereibacter sphaeroides (Rhodobacter sphaeroides), this protein is Biotin sulfoxide reductase.